Here is a 232-residue protein sequence, read N- to C-terminus: Octanoyltransferase (232 aa).

Residues 43–231 (DQTPNYFLFV…HFTQLFDCTV (189 aa)) form the BPL/LPL catalytic domain. Substrate is bound by residues 88–95 (RGGDITYH), 160–162 (ALG), and 173–175 (GFA). The active-site Acyl-thioester intermediate is C191.

The protein belongs to the LipB family.

Its subcellular location is the cytoplasm. The catalysed reaction is octanoyl-[ACP] + L-lysyl-[protein] = N(6)-octanoyl-L-lysyl-[protein] + holo-[ACP] + H(+). Its pathway is protein modification; protein lipoylation via endogenous pathway; protein N(6)-(lipoyl)lysine from octanoyl-[acyl-carrier-protein]: step 1/2. Its function is as follows. Catalyzes the transfer of endogenously produced octanoic acid from octanoyl-acyl-carrier-protein onto the lipoyl domains of lipoate-dependent enzymes. Lipoyl-ACP can also act as a substrate although octanoyl-ACP is likely to be the physiological substrate. This is Octanoyltransferase from Flavobacterium psychrophilum (strain ATCC 49511 / DSM 21280 / CIP 103535 / JIP02/86).